Here is a 76-residue protein sequence, read N- to C-terminus: Bowman-Birk type proteinase inhibitor DE-4 (76 aa).

Intrachain disulfides connect Cys15–Cys69, Cys16–Cys31, Cys19–Cys65, Cys21–Cys29, Cys39–Cys46, Cys43–Cys58, and Cys48–Cys56.

Belongs to the Bowman-Birk serine protease inhibitor family.

This Macrotyloma axillare (Perennial horse gram) protein is Bowman-Birk type proteinase inhibitor DE-4.